The following is a 111-amino-acid chain: Disintegrin DS-AN (111 aa).

The N-terminal stretch at 1-20 (MIQVLLVIICLAVFPYQGSC) is a signal peptide. Positions 21–47 (IILESGNVNDYEIVYPKKLIVLPTGAM) are excised as a propeptide. The 65-residue stretch at 47–111 (MNSPHPCCDP…PDCPRNPYKD (65 aa)) folds into the Disintegrin domain. Cystine bridges form between Cys-53–Cys-76, Cys-67–Cys-73, Cys-72–Cys-97, and Cys-85–Cys-104. The Cell attachment site motif lies at 89–91 (RGD).

Heterodimer; disulfide-linked.

The protein resides in the secreted. In terms of biological role, inhibits ADP-induced platelet aggregation in human platelet-rich plasma (IC(50) is 8 uM). This is Disintegrin DS-AN from Atheris nitschei (Great lakes bush viper).